A 463-amino-acid chain; its full sequence is Pentatricopeptide repeat-containing protein At2g17670 (463 aa).

Residues methionine 1 to proline 63 form a disordered region. PPR repeat units lie at residues glycine 121–proline 157, aspartate 158–proline 192, aspartate 193–aspartate 223, aspartate 229–proline 263, aspartate 264–proline 298, aspartate 299–proline 333, aspartate 334–proline 368, asparagine 369–leucine 403, and glutamate 404–serine 438.

It belongs to the PPR family. P subfamily.

The polypeptide is Pentatricopeptide repeat-containing protein At2g17670 (Arabidopsis thaliana (Mouse-ear cress)).